Reading from the N-terminus, the 74-residue chain is Acyl carrier protein (74 aa).

The region spanning 1 to 74 (MFEKVRKIIA…DVVEYIKNNS (74 aa)) is the Carrier domain. S34 is modified (O-(pantetheine 4'-phosphoryl)serine).

This sequence belongs to the acyl carrier protein (ACP) family. Post-translationally, 4'-phosphopantetheine is transferred from CoA to a specific serine of apo-ACP by AcpS. This modification is essential for activity because fatty acids are bound in thioester linkage to the sulfhydryl of the prosthetic group.

It localises to the cytoplasm. The protein operates within lipid metabolism; fatty acid biosynthesis. Carrier of the growing fatty acid chain in fatty acid biosynthesis. The polypeptide is Acyl carrier protein (Acetivibrio thermocellus (strain ATCC 27405 / DSM 1237 / JCM 9322 / NBRC 103400 / NCIMB 10682 / NRRL B-4536 / VPI 7372) (Clostridium thermocellum)).